The chain runs to 505 residues: 2-isopropylmalate synthase (505 aa).

The Pyruvate carboxyltransferase domain occupies 5–269; that stretch reads IKIFDTTLRD…ETGIHTEYLY (265 aa). 4 residues coordinate Mn(2+): Asp14, His204, His206, and Asn240. A regulatory domain region spans residues 393–505; it reads SLLYFHTFTG…AVNRFELRKR (113 aa).

Belongs to the alpha-IPM synthase/homocitrate synthase family. LeuA type 1 subfamily. In terms of assembly, homodimer. It depends on Mn(2+) as a cofactor.

Its subcellular location is the cytoplasm. It carries out the reaction 3-methyl-2-oxobutanoate + acetyl-CoA + H2O = (2S)-2-isopropylmalate + CoA + H(+). It functions in the pathway amino-acid biosynthesis; L-leucine biosynthesis; L-leucine from 3-methyl-2-oxobutanoate: step 1/4. Its function is as follows. Catalyzes the condensation of the acetyl group of acetyl-CoA with 3-methyl-2-oxobutanoate (2-ketoisovalerate) to form 3-carboxy-3-hydroxy-4-methylpentanoate (2-isopropylmalate). This chain is 2-isopropylmalate synthase, found in Sediminispirochaeta smaragdinae (strain DSM 11293 / JCM 15392 / SEBR 4228) (Spirochaeta smaragdinae).